An 853-amino-acid chain; its full sequence is DNA mismatch repair protein MutS (853 aa).

614–621 lines the ATP pocket; it reads GPNMGGKS.

It belongs to the DNA mismatch repair MutS family.

Its function is as follows. This protein is involved in the repair of mismatches in DNA. It is possible that it carries out the mismatch recognition step. This protein has a weak ATPase activity. The polypeptide is DNA mismatch repair protein MutS (Shigella dysenteriae serotype 1 (strain Sd197)).